A 576-amino-acid chain; its full sequence is RNA-directed RNA polymerase subunit beta (576 aa).

The 133-residue stretch at 259 to 391 (RLARDGSLLN…PNRKKTFCDG (133 aa)) folds into the RdRp catalytic domain. 3 residues coordinate Mg(2+): aspartate 274, aspartate 359, and aspartate 360.

In terms of assembly, homodimer; the replicase complex can dimerize. Part of the viral RNA-dependent RNA polymerase complex, the other subunits are the host ribosomal protein S1, EF-Tu and EF-Ts. S1 is needed for the initiation of genomic RNA (+)-strand replication. Mg(2+) serves as cofactor.

The enzyme catalyses RNA(n) + a ribonucleoside 5'-triphosphate = RNA(n+1) + diphosphate. Its function is as follows. This is the catalytic subunit of the viral RNA-dependent RNA polymerase complex. This complex is involved in viral RNA replication that produces (+)-stranded genomes via a complementary, (-)-stranded intermediate. Binds RNA cooperatively with the host ribosomal protein S1. In Enterobacteria phage SP (Bacteriophage SP), this protein is RNA-directed RNA polymerase subunit beta.